The sequence spans 237 residues: Leucyl/phenylalanyl-tRNA--protein transferase (237 aa).

Belongs to the L/F-transferase family.

It localises to the cytoplasm. The enzyme catalyses N-terminal L-lysyl-[protein] + L-leucyl-tRNA(Leu) = N-terminal L-leucyl-L-lysyl-[protein] + tRNA(Leu) + H(+). The catalysed reaction is N-terminal L-arginyl-[protein] + L-leucyl-tRNA(Leu) = N-terminal L-leucyl-L-arginyl-[protein] + tRNA(Leu) + H(+). It catalyses the reaction L-phenylalanyl-tRNA(Phe) + an N-terminal L-alpha-aminoacyl-[protein] = an N-terminal L-phenylalanyl-L-alpha-aminoacyl-[protein] + tRNA(Phe). Functionally, functions in the N-end rule pathway of protein degradation where it conjugates Leu, Phe and, less efficiently, Met from aminoacyl-tRNAs to the N-termini of proteins containing an N-terminal arginine or lysine. This is Leucyl/phenylalanyl-tRNA--protein transferase from Shewanella baltica (strain OS155 / ATCC BAA-1091).